Reading from the N-terminus, the 272-residue chain is Formamidopyrimidine-DNA glycosylase (272 aa).

P2 (schiff-base intermediate with DNA) is an active-site residue. E3 acts as the Proton donor in catalysis. K58 acts as the Proton donor; for beta-elimination activity in catalysis. DNA contacts are provided by H93, R112, and R153. The FPG-type zinc-finger motif lies at 238 to 272 (HVYGKSGQHCPKCGNILEDLKISNRGTVYCPHCQR). The Proton donor; for delta-elimination activity role is filled by R262.

The protein belongs to the FPG family. In terms of assembly, monomer. Requires Zn(2+) as cofactor.

It catalyses the reaction Hydrolysis of DNA containing ring-opened 7-methylguanine residues, releasing 2,6-diamino-4-hydroxy-5-(N-methyl)formamidopyrimidine.. It carries out the reaction 2'-deoxyribonucleotide-(2'-deoxyribose 5'-phosphate)-2'-deoxyribonucleotide-DNA = a 3'-end 2'-deoxyribonucleotide-(2,3-dehydro-2,3-deoxyribose 5'-phosphate)-DNA + a 5'-end 5'-phospho-2'-deoxyribonucleoside-DNA + H(+). Functionally, involved in base excision repair of DNA damaged by oxidation or by mutagenic agents. Acts as a DNA glycosylase that recognizes and removes damaged bases. Has a preference for oxidized purines, such as 7,8-dihydro-8-oxoguanine (8-oxoG). Has AP (apurinic/apyrimidinic) lyase activity and introduces nicks in the DNA strand. Cleaves the DNA backbone by beta-delta elimination to generate a single-strand break at the site of the removed base with both 3'- and 5'-phosphates. The chain is Formamidopyrimidine-DNA glycosylase from Dichelobacter nodosus (strain VCS1703A).